The following is a 138-amino-acid chain: MVDLSKNDGGSGKAGKGVSDAIDTVLYYVVDLKKQQPMVQLGVGAGFGTVTGYFVTKGGRLVAATVGISFLLAQFAIHKGYITLNESKIERDMKNLHKSVMNKVSGKKVINISDSFVSEYRWILGGFAAGMLIGFSVA.

2 consecutive transmembrane segments (helical) span residues 37–56 and 61–78; these read PMVQLGVGAGFGTVTGYFVT and LVAATVGISFLLAQFAIH. N-linked (GlcNAc...) asparagine glycosylation is found at Asn-85 and Asn-111.

It belongs to the FUN14 family. In terms of tissue distribution, broadly expressed in somatic tissues. Expressed in the hermaphrodite spermatheca and male gonad. Expressed in spermatids, but not expressed in oocytes.

It localises to the mitochondrion outer membrane. Its function is as follows. Mitophagy receptor which plays a role in paternal mitochondria degradation in embryos after the two-cell stage. The sequence is that of FUN14 domain-containing protein fndc-1 from Caenorhabditis elegans.